We begin with the raw amino-acid sequence, 384 residues long: S-adenosylmethionine synthase (384 aa).

Residue histidine 15 coordinates ATP. Aspartate 17 is a binding site for Mg(2+). Glutamate 43 is a K(+) binding site. L-methionine is bound by residues glutamate 56 and glutamine 99. A flexible loop region spans residues 99 to 109; it reads QSPDINQGVDR. Residues 164 to 166, 230 to 231, aspartate 239, 245 to 246, alanine 262, and lysine 266 contribute to the ATP site; these read DAK, RF, and RK. Residue aspartate 239 participates in L-methionine binding. Lysine 270 serves as a coordination point for L-methionine.

This sequence belongs to the AdoMet synthase family. As to quaternary structure, homotetramer; dimer of dimers. Mg(2+) is required as a cofactor. The cofactor is K(+).

The protein resides in the cytoplasm. It catalyses the reaction L-methionine + ATP + H2O = S-adenosyl-L-methionine + phosphate + diphosphate. Its pathway is amino-acid biosynthesis; S-adenosyl-L-methionine biosynthesis; S-adenosyl-L-methionine from L-methionine: step 1/1. Its function is as follows. Catalyzes the formation of S-adenosylmethionine (AdoMet) from methionine and ATP. The overall synthetic reaction is composed of two sequential steps, AdoMet formation and the subsequent tripolyphosphate hydrolysis which occurs prior to release of AdoMet from the enzyme. This Enterobacter sp. (strain 638) protein is S-adenosylmethionine synthase.